The sequence spans 694 residues: MVLINGIKYACERCIRGHRVTTCNHTDQPLMMIKPKGRPSTTCDYCKQLRKNKNANPEGVCTCGRLEKKKLAQKAKEEARAKAKEKQRKQCTCGTDEVCKYHAQKRHLRKSPSSSQKKGRSISRSQPMFERVLSSTSLDSNMLSGHGALSDTSSILTSTFLDSEPGVGKISKDYHHVPSLASISSLQSSQSLDQNFSIPQSPPLSSMSFNFLTGNINETNQNHSNHQHSKSGNNWQDSSVSLPAKADSRLNMMDKNNSVGLDLLGHSKRISPISNSRVGEVSVPLEEYIPSDIDGVGRVTDKSSLVYDWPFDESIERNFSTTATAATGESKFDINDNCNRINSKSYSKTNSMNGNGMNNSNNNNINSNGNDKNNNNSSRQEHQGNGLFDMFTDSSSISTLSRANLLLQEKIGSQENSVKQENYSKNPQLRHQLTSRSRSFIHHPANEYLKNTFGNSHSNDIGKGVEVLSLTPSFMDIPEKERETERSPSSNYITDRPFTRKPRSSSIDVNHRYPPMAPTTVATSPGALNNAVASNLDDQLSLTSLNSQPSSIANMMMDPSNLAEQSSIHSVPQSINSPRMPKTGSRQDKNIHTKKEERNPLNNIHDLSQLENVPDEMNQMFSPPLKSMNRPDAIRENSSSSNFIIQGNSMISTPSGRNDLPDTSPMSSIQTASPPSQLLTDQGFADLDNFMSSL.

The segment at residues 1–40 is a DNA-binding region (copper-fist); that stretch reads MVLINGIKYACERCIRGHRVTTCNHTDQPLMMIKPKGRPS. Residues Cys11, Cys14, Cys23, and His25 each coordinate Zn(2+). Disordered stretches follow at residues 104–128 and 209–240; these read QKRH…SQPM and FNFL…DSSV. A compositionally biased stretch (polar residues) spans 111–126; that stretch reads SPSSSQKKGRSISRSQ. Ser125, Ser231, Ser241, and Ser291 each carry phosphoserine. 4 disordered regions span residues 332–388, 479–514, 566–588, and 650–677; these read FDIN…NGLF, EKER…HRYP, SSIH…SRQD, and MIST…PPSQ. Over residues 336–349 the composition is skewed to polar residues; the sequence is DNCNRINSKSYSKT. The span at 350-378 shows a compositional bias: low complexity; that stretch reads NSMNGNGMNNSNNNNINSNGNDKNNNNSS. 2 stretches are compositionally biased toward polar residues: residues 566–577 and 664–677; these read SSIHSVPQSINS and SPMS…PPSQ.

It is found in the nucleus. Functionally, regulates the transcription of a set of genes, many of which encode membrane proteins. Among the genes regulated are YGR138C and YRO2. Does not seem to be dependent on copper. The polypeptide is Transcriptional activator HAA1 (HAA1) (Saccharomyces cerevisiae (strain ATCC 204508 / S288c) (Baker's yeast)).